The following is a 156-amino-acid chain: FUN14 domain-containing protein 1 (156 aa).

The YXXL motif lies at Y19–L22. The next 3 helical transmembrane spans lie at Y49–F69, A76–V96, and F135–A155.

It belongs to the FUN14 family.

The protein resides in the mitochondrion outer membrane. Its function is as follows. Acts as an activator of hypoxia-induced mitophagy, an important mechanism for mitochondrial quality control. This chain is FUN14 domain-containing protein 1 (FUNDC1), found in Gallus gallus (Chicken).